Reading from the N-terminus, the 1281-residue chain is Zinc finger transcription factor Trps1 (1281 aa).

Disordered regions lie at residues 1–101 and 116–204; these read MVRK…VSFP and PAAG…KGDL. Polar residues-rich tracts occupy residues 21–31 and 40–49; these read LEPTATESKVS and DQMSENTDQS. Lys29 participates in a covalent cross-link: Glycyl lysine isopeptide (Lys-Gly) (interchain with G-Cter in SUMO2). Residues Ser90 and Ser127 each carry the phosphoserine modification. Basic and acidic residues predominate over residues 148 to 162; sequence LETKEEHKMSPKATE. The segment covering 166-189 has biased composition (polar residues); it reads PVQSGQANCQGLSPVSVASKNPQV. Residues Ser178 and Ser216 each carry the phosphoserine modification. The C2H2-type 1; atypical zinc-finger motif lies at 222-247; sequence FKCNICGYGYYGNDPTDLIKHFRKYH. Residue Lys263 forms a Glycyl lysine isopeptide (Lys-Gly) (interchain with G-Cter in SUMO2) linkage. The C2H2-type 2; atypical zinc finger occupies 333–358; it reads FRCKFCNFTYMGNSSTELEQHFLQTH. Residues 365 to 393 form a disordered region; sequence SLPSSEGVKPSEKNSNKSIPALRASDSGD. Residues Lys418, Lys457, Lys474, and Lys488 each participate in a glycyl lysine isopeptide (Lys-Gly) (interchain with G-Cter in SUMO2) cross-link. Positions 484–515 are disordered; it reads NDLAKSVEGEPLTKPEKGLSGAKKKDFPSKGA. Over residues 488–515 the composition is skewed to basic and acidic residues; the sequence is KSVEGEPLTKPEKGLSGAKKKDFPSKGA. The C2H2-type 3; atypical zinc-finger motif lies at 614-637; the sequence is HQCHQCSFSTPDVDVLLFHYETVH. The segment at 635-819 is mediates interaction with GLI3; that stretch reads TVHESQASDV…SLGLLTPVSS (185 aa). A Glycyl lysine isopeptide (Lys-Gly) (interchain with G-Cter in SUMO2) cross-link involves residue Lys645. C2H2-type zinc fingers lie at residues 666–689 and 692–715; these read HSCTKCDFITQVEEEISRHYRRAH and YKCRQCSFTAADTQSLLEHFNTVH. Residues Lys737 and Lys755 each participate in a glycyl lysine isopeptide (Lys-Gly) (interchain with G-Cter in SUMO2) cross-link. Residue Lys766 forms a Glycyl lysine isopeptide (Lys-Gly) (interchain with G-Cter in SUMO1); alternate linkage. Lys766 is covalently cross-linked (Glycyl lysine isopeptide (Lys-Gly) (interchain with G-Cter in SUMO2); alternate). Glycyl lysine isopeptide (Lys-Gly) (interchain with G-Cter in SUMO2) cross-links involve residues Lys825 and Lys850. Positions 856-885 are disordered; sequence APAGSEKSASLTQQYPASGESKTKDESQSL. The segment covering 862–871 has biased composition (polar residues); the sequence is KSASLTQQYP. Residues Lys877 and Lys879 each participate in a glycyl lysine isopeptide (Lys-Gly) (interchain with G-Cter in SUMO2) cross-link. Residues 896–920 form a GATA-type zinc finger; the sequence is CANCLTTKTSLWRKNANGGYVCNAC. Residues Lys925, Lys937, and Lys965 each participate in a glycyl lysine isopeptide (Lys-Gly) (interchain with G-Cter in SUMO2) cross-link. Residues 961–977 show a composition bias toward polar residues; that stretch reads EQLNKQQRGSGEEQVNG. The disordered stretch occupies residues 961 to 1000; that stretch reads EQLNKQQRGSGEEQVNGSPLERRSEDHLSESHPREIPLPS. The residue at position 978 (Ser978) is a Phosphoserine. Residues 980-995 are compositionally biased toward basic and acidic residues; sequence LERRSEDHLSESHPRE. Residues 985–1184 are mediates interaction with RNF4; that stretch reads EDHLSESHPR…PTANGASKEK (200 aa). Glycyl lysine isopeptide (Lys-Gly) (interchain with G-Cter in SUMO2) cross-links involve residues Lys1003, Lys1012, Lys1030, and Lys1040. Residues 1040-1049 are compositionally biased toward polar residues; that stretch reads KSPQESTGDP. Residues 1040-1078 are disordered; that stretch reads KSPQESTGDPGNSSSVSDGKGSSERGSPIEKYMRPAKHP. Ser1041 carries the post-translational modification Phosphoserine. Low complexity predominate over residues 1050 to 1059; that stretch reads GNSSSVSDGK. Basic and acidic residues predominate over residues 1060 to 1072; sequence GSSERGSPIEKYM. A Phosphoserine modification is found at Ser1066. A Glycyl lysine isopeptide (Lys-Gly) (interchain with G-Cter in SUMO2) cross-link involves residue Lys1070. Phosphoserine is present on Ser1085. The segment at 1163–1281 is transcriptional repressor domain; that stretch reads PLDLAIKHSR…QAEKNGKPKE (119 aa). The interval 1169-1195 is disordered; that stretch reads KHSRPGPTANGASKEKTKAPPTVKNED. Glycyl lysine isopeptide (Lys-Gly) (interchain with G-Cter in SUMO2); alternate cross-links involve residues Lys1192 and Lys1201. Residues Lys1192 and Lys1201 each participate in a glycyl lysine isopeptide (Lys-Gly) (interchain with G-Cter in SUMO); alternate cross-link. A Glycyl lysine isopeptide (Lys-Gly) (interchain with G-Cter in SUMO1); alternate cross-link involves residue Lys1201. 2 consecutive C2H2-type zinc fingers follow at residues 1215–1237 and 1243–1267; these read TKCVHCGIVFLDEVMYALHMSCH and FQCSICQHLCTDKYDFTTHIQRGLH.

As to quaternary structure, interacts with RNF4; regulates TRPS1 repressor activity. Interacts specifically with the activator form of GLI3 (GLI3A) but not with the repressor form (GLI3R). In terms of processing, sumoylated. Sumoylation in the repressor domain inhibits the transcription repression activity. Sumoylation on Lys-1201 is the major site. Appears to be sumoylated on multiple sites. In the embryo, expression is detected in both visceral and skeletal tissues. Found in the maxilla, mandible, snout, prospective phalanges and in the femoral head within the developing hip. Also expressed in the hair follicles.

Its subcellular location is the nucleus. In terms of biological role, transcriptional repressor. Binds specifically to GATA sequences and represses expression of GATA-regulated genes at selected sites and stages in vertebrate development. Regulates chondrocyte proliferation and differentiation. Executes multiple functions in proliferating chondrocytes, expanding the region of distal chondrocytes, activating proliferation in columnar cells and supporting the differentiation of columnar into hypertrophic chondrocytes. This chain is Zinc finger transcription factor Trps1 (Trps1), found in Mus musculus (Mouse).